Reading from the N-terminus, the 195-residue chain is Peptidyl-tRNA hydrolase (195 aa).

Tyrosine 17 is a binding site for tRNA. The active-site Proton acceptor is histidine 22. Residues phenylalanine 68, asparagine 70, and asparagine 116 each coordinate tRNA.

This sequence belongs to the PTH family. In terms of assembly, monomer.

Its subcellular location is the cytoplasm. The enzyme catalyses an N-acyl-L-alpha-aminoacyl-tRNA + H2O = an N-acyl-L-amino acid + a tRNA + H(+). Functionally, hydrolyzes ribosome-free peptidyl-tRNAs (with 1 or more amino acids incorporated), which drop off the ribosome during protein synthesis, or as a result of ribosome stalling. Catalyzes the release of premature peptidyl moieties from peptidyl-tRNA molecules trapped in stalled 50S ribosomal subunits, and thus maintains levels of free tRNAs and 50S ribosomes. The protein is Peptidyl-tRNA hydrolase of Shewanella amazonensis (strain ATCC BAA-1098 / SB2B).